The primary structure comprises 239 residues: tRNA (guanine-N(7)-)-methyltransferase (239 aa).

Positions 68, 93, 120, and 143 each coordinate S-adenosyl-L-methionine. Asp-143 is a catalytic residue. Residues Lys-147, Asp-180, and 217-220 (TKFE) contribute to the substrate site.

The protein belongs to the class I-like SAM-binding methyltransferase superfamily. TrmB family.

The enzyme catalyses guanosine(46) in tRNA + S-adenosyl-L-methionine = N(7)-methylguanosine(46) in tRNA + S-adenosyl-L-homocysteine. It functions in the pathway tRNA modification; N(7)-methylguanine-tRNA biosynthesis. In terms of biological role, catalyzes the formation of N(7)-methylguanine at position 46 (m7G46) in tRNA. In Vibrio parahaemolyticus serotype O3:K6 (strain RIMD 2210633), this protein is tRNA (guanine-N(7)-)-methyltransferase.